The primary structure comprises 98 residues: Tax1-binding protein 3 (98 aa).

S2 carries the post-translational modification N-acetylserine. Positions 12-87 (VVQRVEIHKL…VVRLLVTRQS (76 aa)) constitute a PDZ domain.

Interacts (via its PDZ domain) with GLS2. Interacts (via its PDZ domain) with RTKN (via the C-terminal region); this interaction facilitates Rho-mediated activation of the FOS serum response element (SRE). Interacts (via PDZ domain) with ARHGEF16. Interacts (via PDZ domain) with KCNJ4 (via C-terminus). Competes with LIN7A for KCNJ4 binding. Interacts (via its PDZ domain) with CTNNB1; this interaction inhibits the transcriptional activity of CTNNB1. Interacts with ADGRB2. In terms of tissue distribution, detected in kidney distal convoluted tubules (at protein level).

Its subcellular location is the cytoplasm. It localises to the nucleus. The protein resides in the cell membrane. In terms of biological role, may regulate a number of protein-protein interactions by competing for PDZ domain binding sites. Binds CTNNB1 and may thereby act as an inhibitor of the Wnt signaling pathway. Competes with LIN7A for KCNJ4 binding, and thereby promotes KCNJ4 internalization. May play a role in the Rho signaling pathway. This Rattus norvegicus (Rat) protein is Tax1-binding protein 3.